Here is a 710-residue protein sequence, read N- to C-terminus: Elongation factor G (710 aa).

The tr-type G domain occupies S8–M290. GTP is bound by residues A17 to T24, D88 to H92, and N142 to D145.

Belongs to the TRAFAC class translation factor GTPase superfamily. Classic translation factor GTPase family. EF-G/EF-2 subfamily.

The protein localises to the cytoplasm. Catalyzes the GTP-dependent ribosomal translocation step during translation elongation. During this step, the ribosome changes from the pre-translocational (PRE) to the post-translocational (POST) state as the newly formed A-site-bound peptidyl-tRNA and P-site-bound deacylated tRNA move to the P and E sites, respectively. Catalyzes the coordinated movement of the two tRNA molecules, the mRNA and conformational changes in the ribosome. The chain is Elongation factor G from Buchnera aphidicola subsp. Baizongia pistaciae (strain Bp).